Consider the following 183-residue polypeptide: MSRIGKKPVKIPAGVEVNIEGNTVTVKGPKGKLTRQFPAEITISREGEELQVSRPSDAKPHRALHGLSRALLQNMVDGVTRGFEKGLELVGVGYRAAKQGNKLVLSVGYSHPVEMVPGEGLEIEVPAPNKVIVKGIDKEAVGALAAKIRDVRPPEPYKGKGIKYEGEYIRRKVGKTGAKGGKK.

It belongs to the universal ribosomal protein uL6 family. In terms of assembly, part of the 50S ribosomal subunit.

Functionally, this protein binds to the 23S rRNA, and is important in its secondary structure. It is located near the subunit interface in the base of the L7/L12 stalk, and near the tRNA binding site of the peptidyltransferase center. The protein is Large ribosomal subunit protein uL6 of Moorella thermoacetica (strain ATCC 39073 / JCM 9320).